A 74-amino-acid chain; its full sequence is Guanine nucleotide-binding protein G(T) subunit gamma-T1 (74 aa).

C71 carries the post-translational modification Cysteine methyl ester. C71 is lipidated: S-farnesyl cysteine. A propeptide spans 72-74 (removed in mature form); the sequence is VIS.

It belongs to the G protein gamma family. In terms of assembly, g proteins are composed of 3 units, alpha, beta and gamma. As to expression, retinal rod outer segment.

It is found in the cell membrane. Guanine nucleotide-binding proteins (G proteins) are involved as a modulator or transducer in various transmembrane signaling systems. The beta and gamma chains are required for the GTPase activity, for replacement of GDP by GTP, and for G protein-effector interaction. The protein is Guanine nucleotide-binding protein G(T) subunit gamma-T1 (Gngt1) of Mus musculus (Mouse).